Reading from the N-terminus, the 313-residue chain is MLDKIIRIATRQSPLALWQAHYVQHLLQANHPGLQIELVPMVTRGDIILDTPLAKVGGKGLFVKELELALLDGRADIAVHSMKDVPIAFPEGLGLVAICEREDPRDAFVSSHYAHLDDLPAGSVVGTSSLRRQCQLRERRPDLIIRDLRGNVGTRLAKLDNGDYQAIILAVAGLKRLGLETRIRYAMSAEESLPAVGQGAVGIECRLDDDHTRQLLAPLNHRHTELRVCAERAMNIRLEGGCQVPIGSYAELEGDTLWLRALVGAPDGSQMIRGERRGPAAEAEQMGIELADELLSRGAREILAAVYLDNPAR.

C242 carries the S-(dipyrrolylmethanemethyl)cysteine modification.

The protein belongs to the HMBS family. As to quaternary structure, monomer. Dipyrromethane serves as cofactor.

The enzyme catalyses 4 porphobilinogen + H2O = hydroxymethylbilane + 4 NH4(+). It participates in porphyrin-containing compound metabolism; protoporphyrin-IX biosynthesis; coproporphyrinogen-III from 5-aminolevulinate: step 2/4. Tetrapolymerization of the monopyrrole PBG into the hydroxymethylbilane pre-uroporphyrinogen in several discrete steps. This is Porphobilinogen deaminase from Yersinia pseudotuberculosis serotype IB (strain PB1/+).